An 886-amino-acid polypeptide reads, in one-letter code: MSQQGLEALLRPKSIAVIGASMKPHRAGYLMMRNLLAGGFNGPVLPVTPAWKAVLGVMAWPDIASLPFTPDLAILCTNASRNLALLDALGAKGCKTCIILSAPTSQHEELLACARHYKMRLLGPNSLGLLAPWQGLNASFSPVPIKQGKLAFISQSAAVSNTILDWAQQREMGFSYFIALGDSLDIDVDELLDYLARDSKTSAILLYLEQLSDARRFVSAARSASRNKPILVIKSGRSPAAQRLLNTSAGMDPAWDAAIQRAGLLRVQDTHELFSAVETLSHMRPLRGDRLMIISNGAAPAALALDELWSRNGKLATLSEETCLQLRQALPAHIDIANPLDLCDDASSEHYVKTLDILLASQDFDALMVIHSPSAAAPGTESAHALIETIKRHPRGKFVTLLTNWCGEFSSQEARRLFSEAGLPTYRTPEGTITAFMHMVEYRRNQKQLRETPALPSNLTSNTAEAHNLLQRAIAEGAASLDTHEVQPILHAYGLHTLPTWIASDSAEAVHIAEQIGYPVALKLRSPDIPHKSEVQGVMLYLRTASEVQQAANAIFDRVKMAWPQARIHGLLVQSMANRAGAQELRVVVEHDPVFGPLIMLGEGGVEWRPEEQAVVALPPLNMNLARYLVIQGIKQRKIRARSALRPLDIVGLSQLLVQVSNLIVDCPEIQRLDIHPLLASASEFTALDVTLDIAPFDGDNESRLAVRPYPHQLEEWVEMKNGDRCLFRPILPEDEPQLRQFIAQVTKEDLYYRYFSEINEFTHEDLANMTQIDYDREMAFVAVRRMDNAEEILGVTRAISDPDNVDAEFAVLVRSDLKGLGLGRRLMEKLIAYTRDHGLKRLNGITMPNNRGMVALARKLGFQVDIQLEEGIVGLTLNLAKCDES.

One can recognise an ATP-grasp domain in the interval 487–523 (QPILHAYGLHTLPTWIASDSAEAVHIAEQIGYPVALK). 513–524 (AEQIGYPVALKL) is an ATP binding site. The N-acetyltransferase domain occupies 726-881 (CLFRPILPED…GIVGLTLNLA (156 aa)).

The protein in the N-terminal section; belongs to the acetate CoA ligase alpha subunit family. This sequence in the central section; belongs to the acetate CoA ligase beta subunit family. Monomer in the absence of acetyl-CoA. Oligomerizes to a tetrameric form in the presence of acetyl-CoA.

The enzyme catalyses L-lysyl-[protein] + acetyl-CoA = N(6)-acetyl-L-lysyl-[protein] + CoA + H(+). Exhibits positive cooperativity. It may be the result of acetyl-CoA binding to two distinct sites, or the result of subunit interactions. In terms of biological role, acetylates and inactivates the acetyl-CoA synthase (Acs). Can also acetylate other central metabolic enzymes in response to environmental changes. This Salmonella typhimurium (strain LT2 / SGSC1412 / ATCC 700720) protein is Peptidyl-lysine N-acetyltransferase Pat (pat).